The primary structure comprises 169 residues: Ribosome maturation factor RimM (169 aa).

The PRC barrel domain occupies Asp94 to Leu168.

The protein belongs to the RimM family. As to quaternary structure, binds ribosomal protein uS19.

The protein localises to the cytoplasm. Functionally, an accessory protein needed during the final step in the assembly of 30S ribosomal subunit, possibly for assembly of the head region. Essential for efficient processing of 16S rRNA. May be needed both before and after RbfA during the maturation of 16S rRNA. It has affinity for free ribosomal 30S subunits but not for 70S ribosomes. This is Ribosome maturation factor RimM from Cereibacter sphaeroides (strain ATCC 17025 / ATH 2.4.3) (Rhodobacter sphaeroides).